Consider the following 487-residue polypeptide: 7-deoxyloganetin glucosyltransferase (487 aa).

His25 functions as the Proton acceptor in the catalytic mechanism. Residue His25 coordinates an anthocyanidin. The Charge relay role is filled by Asp129. UDP-alpha-D-glucose contacts are provided by Thr151, Gln366, His381, Trp384, Asn385, Ser386, and Glu389. An anthocyanidin is bound at residue Ala404. 2 residues coordinate UDP-alpha-D-glucose: Glu405 and Gln406.

It belongs to the UDP-glycosyltransferase family. In terms of tissue distribution, expressed in roots.

The catalysed reaction is 7-deoxyloganetin + UDP-alpha-D-glucose = 7-deoxyloganin + UDP + H(+). In terms of biological role, iridoid glucosyltransferase acting exclusively on 7-deoxyloganetin. No activity with 7-deoxyloganetic acid. This is 7-deoxyloganetin glucosyltransferase (UGT85A23) from Catharanthus roseus (Madagascar periwinkle).